Reading from the N-terminus, the 442-residue chain is Amino-acid acetyltransferase (442 aa).

The region spanning 295–442 (EQARAATIED…RSKVLSKTIS (148 aa)) is the N-acetyltransferase domain.

This sequence belongs to the acetyltransferase family. ArgA subfamily.

Its subcellular location is the cytoplasm. The enzyme catalyses L-glutamate + acetyl-CoA = N-acetyl-L-glutamate + CoA + H(+). It functions in the pathway amino-acid biosynthesis; L-arginine biosynthesis; N(2)-acetyl-L-ornithine from L-glutamate: step 1/4. The chain is Amino-acid acetyltransferase from Aeromonas salmonicida (strain A449).